An 871-amino-acid chain; its full sequence is uncharacterized protein (871 aa).

The next 11 helical transmembrane spans lie at 11-31 (AFVS…GLFL), 92-112 (YLFT…PILL), 139-159 (FYAH…IIYR), 380-400 (TILT…GCIS), 422-442 (LLGI…MSLV), 475-495 (VQVF…VQVI), 520-540 (FLLQ…TLLL), 562-582 (LSAP…TIMI), 586-606 (IIAP…YFAY), 629-649 (LFQV…LFVL), and 653-673 (WGAT…HLYF). Serine 725, serine 726, serine 727, serine 729, serine 737, and serine 761 each carry phosphoserine. Residues 727–740 (SGSDEFLETSSRTS) show a composition bias toward polar residues. The interval 727–746 (SGSDEFLETSSRTSENTKEK) is disordered.

It belongs to the CSC1 (TC 1.A.17) family.

It localises to the golgi apparatus membrane. In terms of biological role, acts as an osmosensitive calcium-permeable cation channel. This is an uncharacterized protein from Schizosaccharomyces pombe (strain 972 / ATCC 24843) (Fission yeast).